A 289-amino-acid chain; its full sequence is Splicing factor C9orf78 homolog (289 aa).

The span at 1 to 12 (MPVVRKIFRRRR) shows a compositional bias: basic residues. 2 disordered regions span residues 1 to 27 (MPVV…SEEV) and 86 to 109 (GKDK…TNRR). The segment at 5–58 (RKIFRRRRGDSESEEDEQDSEEVRLKLEETREVQNLRKRPNGVSAVALLVGEKV) is interaction with SNRNP200. 2 positions are modified to phosphoserine: Ser-15 and Ser-17. Residue Tyr-147 is modified to Phosphotyrosine. Basic and acidic residues predominate over residues 232 to 283 (LNAPIRRNKEEPKARPLRVGDTEKPEPERSPPNRKRPANEKATDDYHYEKFK). The disordered stretch occupies residues 232–289 (LNAPIRRNKEEPKARPLRVGDTEKPEPERSPPNRKRPANEKATDDYHYEKFKKMNRRY). At Thr-253 the chain carries Phosphothreonine. Ser-261 carries the phosphoserine modification.

This sequence belongs to the TLS1 family. Component of the spliceosome. Interacts with SNRNP200; the interaction is direct. Interacts with PRPF8.

The protein resides in the nucleus. It is found in the chromosome. The protein localises to the centromere. Plays a role in pre-mRNA splicing by promoting usage of the upstream 3'-splice site at alternative NAGNAG splice sites; these are sites featuring alternative acceptor motifs separated by only a few nucleotides. May also modulate exon inclusion events. Plays a role in spliceosomal remodeling by displacing WBP4 from SNRNP200 and may act to inhibit SNRNP200 helicase activity. Binds U5 snRNA. Required for proper chromosome segregation. Not required for splicing of shelterin components. The protein is Splicing factor C9orf78 homolog of Pongo abelii (Sumatran orangutan).